Reading from the N-terminus, the 264-residue chain is Undecaprenyl-diphosphatase (264 aa).

Helical transmembrane passes span 38 to 58 (RSDF…VLVF), 75 to 95 (REYV…GLVV), 106 to 126 (VSPV…VEAY), 136 to 156 (VTWT…VFPG), 181 to 201 (FVFL…FLEM), 217 to 237 (VAFL…MGYI), and 242 to 262 (FTAF…WLPS).

Belongs to the UppP family.

The protein resides in the cell membrane. The catalysed reaction is di-trans,octa-cis-undecaprenyl diphosphate + H2O = di-trans,octa-cis-undecaprenyl phosphate + phosphate + H(+). Catalyzes the dephosphorylation of undecaprenyl diphosphate (UPP). Confers resistance to bacitracin. This chain is Undecaprenyl-diphosphatase, found in Stenotrophomonas maltophilia (strain K279a).